The following is a 501-amino-acid chain: Carboxypeptidase 1 (501 aa).

The region spanning 3-496 (IHTYEKEFFD…LIDYLSNKYS (494 aa)) is the Peptidase M32 domain. The short motif at 234-236 (HPF) is the HPF element. The DXRXT signature appears at 244-248 (DVRVT). A Zn(2+)-binding site is contributed by His-265. The HEXXH signature appears at 265–269 (HECGH). The active-site Proton donor/acceptor is Glu-266. Zn(2+) contacts are provided by His-269 and Glu-295. Residues 294–297 (HESQ) carry the HES/GQ motif. Positions 347 to 352 (IRVEAD) match the I/NRXXA/SD motif. The GXXQDXHW motif lies at 402-409 (GILQDVHW).

Belongs to the peptidase M32 family. As to quaternary structure, homodimer. The cofactor is Zn(2+).

It carries out the reaction Release of a C-terminal amino acid with broad specificity, except for -Pro.. Its function is as follows. Broad specificity carboxypetidase that releases amino acids sequentially from the C-terminus, including neutral, aromatic, polar and basic residues. Has lower activity with substrates ending with His or Trp. The protein is Carboxypeptidase 1 (ypwA) of Bacillus subtilis (strain 168).